A 178-amino-acid polypeptide reads, in one-letter code: ATP-dependent protease subunit HslV (178 aa).

Residue Thr-7 is part of the active site. Residues Gly-162, Cys-165, and Thr-168 each contribute to the Na(+) site.

Belongs to the peptidase T1B family. HslV subfamily. As to quaternary structure, a double ring-shaped homohexamer of HslV is capped on each side by a ring-shaped HslU homohexamer. The assembly of the HslU/HslV complex is dependent on binding of ATP.

The protein localises to the cytoplasm. It catalyses the reaction ATP-dependent cleavage of peptide bonds with broad specificity.. With respect to regulation, allosterically activated by HslU binding. Functionally, protease subunit of a proteasome-like degradation complex believed to be a general protein degrading machinery. The protein is ATP-dependent protease subunit HslV of Burkholderia ambifaria (strain MC40-6).